Here is a 433-residue protein sequence, read N- to C-terminus: Phosphomethylpyrimidine synthase (433 aa).

Residues N66, M94, Y123, H162, S184 to G186, D225 to R228, and E264 contribute to the substrate site. H268 provides a ligand contact to Zn(2+). Residue Y291 coordinates substrate. H332 contacts Zn(2+). Residues C408, C411, and C415 each coordinate [4Fe-4S] cluster.

Belongs to the ThiC family. [4Fe-4S] cluster serves as cofactor.

It carries out the reaction 5-amino-1-(5-phospho-beta-D-ribosyl)imidazole + S-adenosyl-L-methionine = 4-amino-2-methyl-5-(phosphooxymethyl)pyrimidine + CO + 5'-deoxyadenosine + formate + L-methionine + 3 H(+). Its pathway is cofactor biosynthesis; thiamine diphosphate biosynthesis. In terms of biological role, catalyzes the synthesis of the hydroxymethylpyrimidine phosphate (HMP-P) moiety of thiamine from aminoimidazole ribotide (AIR) in a radical S-adenosyl-L-methionine (SAM)-dependent reaction. The polypeptide is Phosphomethylpyrimidine synthase (Saccharolobus islandicus (strain M.14.25 / Kamchatka #1) (Sulfolobus islandicus)).